We begin with the raw amino-acid sequence, 448 residues long: N-succinylarginine dihydrolase (448 aa).

Residues 19 to 28, N110, and 137 to 138 each bind substrate; these read GGLSYGNVAS and HR. E174 is a catalytic residue. R214 contributes to the substrate binding site. H250 is a catalytic residue. 2 residues coordinate substrate: D252 and N365. C371 serves as the catalytic Nucleophile.

It belongs to the succinylarginine dihydrolase family. Homodimer.

It catalyses the reaction N(2)-succinyl-L-arginine + 2 H2O + 2 H(+) = N(2)-succinyl-L-ornithine + 2 NH4(+) + CO2. It participates in amino-acid degradation; L-arginine degradation via AST pathway; L-glutamate and succinate from L-arginine: step 2/5. In terms of biological role, catalyzes the hydrolysis of N(2)-succinylarginine into N(2)-succinylornithine, ammonia and CO(2). The protein is N-succinylarginine dihydrolase of Pseudomonas syringae pv. tomato (strain ATCC BAA-871 / DC3000).